The sequence spans 384 residues: S-adenosylmethionine synthase (384 aa).

Position 15 (His-15) interacts with ATP. Mg(2+) is bound at residue Asp-17. Glu-43 contacts K(+). L-methionine-binding residues include Glu-56 and Gln-99. The segment at 99–109 (QSPDINQGVDR) is flexible loop. Residues 164 to 166 (DAK), 230 to 231 (RF), Asp-239, 245 to 246 (RK), Ala-262, and Lys-266 each bind ATP. Asp-239 is a binding site for L-methionine. L-methionine is bound at residue Lys-270.

This sequence belongs to the AdoMet synthase family. As to quaternary structure, homotetramer; dimer of dimers. It depends on Mg(2+) as a cofactor. K(+) is required as a cofactor.

The protein resides in the cytoplasm. The catalysed reaction is L-methionine + ATP + H2O = S-adenosyl-L-methionine + phosphate + diphosphate. Its pathway is amino-acid biosynthesis; S-adenosyl-L-methionine biosynthesis; S-adenosyl-L-methionine from L-methionine: step 1/1. Catalyzes the formation of S-adenosylmethionine (AdoMet) from methionine and ATP. The overall synthetic reaction is composed of two sequential steps, AdoMet formation and the subsequent tripolyphosphate hydrolysis which occurs prior to release of AdoMet from the enzyme. The protein is S-adenosylmethionine synthase of Salmonella gallinarum (strain 287/91 / NCTC 13346).